Consider the following 211-residue polypeptide: Fucoxanthin-chlorophyll a-c binding protein F, chloroplastic (211 aa).

The N-terminal 33 residues, 1–33 (AIACAAAPGLRGPSAFNGAALSTPAKSSSAMKM), are a transit peptide targeting the chloroplast. 3 helical membrane-spanning segments follow: residues 75-95 (IAML…PGML), 116-136 (IPPG…LAVM), and 177-197 (GRAA…SNQP).

This sequence belongs to the fucoxanthin chlorophyll protein family. The LHC complex of chromophytic algae is composed of fucoxanthin, chlorophyll A and C bound non-covalently by fucoxanthin chlorophyll proteins (FCPs). The ratio of pigments in this LHC is; fucoxanthin: chlorophyll C: chlorophyll A; (0.6-1): (0.1-0.3): (1).

It localises to the plastid. The protein localises to the chloroplast thylakoid membrane. In terms of biological role, the light-harvesting complex (LHC) functions as a light receptor, it captures and delivers excitation energy to photosystems with which it is closely associated. Energy is transferred from the carotenoid and chlorophyll C (or B) to chlorophyll A and the photosynthetic reaction centers where it is used to synthesize ATP and reducing power. The chain is Fucoxanthin-chlorophyll a-c binding protein F, chloroplastic (FCPF) from Macrocystis pyrifera (Giant kelp).